The chain runs to 801 residues: Probable inorganic carbon transporter subunit DabA (801 aa).

Cys-330, Asp-332, His-489, and Cys-504 together coordinate Zn(2+).

It belongs to the inorganic carbon transporter (TC 9.A.2) DabA family. Forms a complex with DabB. Zn(2+) serves as cofactor.

It is found in the cell inner membrane. Part of an energy-coupled inorganic carbon pump. This is Probable inorganic carbon transporter subunit DabA from Jannaschia sp. (strain CCS1).